Reading from the N-terminus, the 58-residue chain is UPF0337 protein CE1672 (58 aa).

The segment covering 1–39 has biased composition (basic and acidic residues); that stretch reads MGLGDKIRNTAEKASGKVKEATGKATDNEKLEAEGKTDQ. A disordered region spans residues 1–58; that stretch reads MGLGDKIRNTAEKASGKVKEATGKATDNEKLEAEGKTDQFKGNAKNTVENAKDTLRGN.

Belongs to the UPF0337 (CsbD) family.

This chain is UPF0337 protein CE1672, found in Corynebacterium efficiens (strain DSM 44549 / YS-314 / AJ 12310 / JCM 11189 / NBRC 100395).